Reading from the N-terminus, the 135-residue chain is MLSPKRTKYRKYHRGRMKGKALRGSKIVYGGFALQATEPCWITSRQIEAGRRVLTRFVKRGGKLWIRIFPDKPVTMRAAGSRMGSGKGAPAYWVAVVKPGRIIYEMKGVSDKIATRALKIAGYKMPVKTKVLKPL.

Belongs to the universal ribosomal protein uL16 family. Part of the 50S ribosomal subunit.

Its subcellular location is the plastid. The protein resides in the chloroplast. The sequence is that of Large ribosomal subunit protein uL16c from Stigeoclonium helveticum (Green alga).